Consider the following 220-residue polypeptide: Protein GrpE (220 aa).

Residues 1-55 (MCGGDVQGQGVASGCDEALERADSLRASDPVPVESGEGSVPGEHSQELETGASEE) form a disordered region.

Belongs to the GrpE family. Homodimer.

The protein resides in the cytoplasm. Functionally, participates actively in the response to hyperosmotic and heat shock by preventing the aggregation of stress-denatured proteins, in association with DnaK and GrpE. It is the nucleotide exchange factor for DnaK and may function as a thermosensor. Unfolded proteins bind initially to DnaJ; upon interaction with the DnaJ-bound protein, DnaK hydrolyzes its bound ATP, resulting in the formation of a stable complex. GrpE releases ADP from DnaK; ATP binding to DnaK triggers the release of the substrate protein, thus completing the reaction cycle. Several rounds of ATP-dependent interactions between DnaJ, DnaK and GrpE are required for fully efficient folding. This Treponema pallidum (strain Nichols) protein is Protein GrpE.